The following is a 163-amino-acid chain: MSKESSFDIVSKVDLSEVANAINIAMKEIKTRYDFKGSKSDISLEKDELVLISDDEFKLEQLKDVLIGKLIKRGVATKNIQYGKIEPAAGGTVRQRAKLVQGIDKENAKKITTIIKNTGLKVKSQVQDDQIRVSGKSKDDLQKVIAAIREADLPIEVQFVNYR.

It belongs to the YajQ family.

Its function is as follows. Nucleotide-binding protein. The protein is Nucleotide-binding protein GK0742 of Geobacillus kaustophilus (strain HTA426).